Consider the following 2243-residue polypeptide: Zinc finger FYVE domain-containing protein 26 homolog (2243 aa).

Disordered stretches follow at residues 386–416 (SQRK…RPTA) and 514–556 (KKKA…GKAS). A compositionally biased stretch (acidic residues) spans 393-408 (GENDEEDDEQYVDDDV). At Tyr-403 the chain carries Phosphotyrosine. Basic and acidic residues predominate over residues 517 to 528 (ASSDDESRERSN). The segment covering 534 to 543 (NRRKARRQRR) has biased composition (basic residues). The LRR 1 repeat unit spans residues 617–644 (KKIIETFHLEHSQLNRELHFMEQQQLVK). At Ser-1424 the chain carries Phosphoserine. Residues 1444–1500 (DEEASHCMCCRRAAFTMLMRRHHCRRCGRVVCYACSTHRIRIPELYDELEVRICNDC) form an FYVE-type zinc finger. Zn(2+) is bound by residues Cys-1450, Cys-1453, Cys-1467, Cys-1470, Cys-1475, Cys-1478, Cys-1497, and Cys-1500. The disordered stretch occupies residues 1505-1534 (TPAKDQGDGTSSERSAISGQVSKSSGRSDS). Residues 1512–1534 (DGTSSERSAISGQVSKSSGRSDS) are compositionally biased toward polar residues. The stretch at 1887–1912 (YPQLANGGLNVLMDELQQLDDAQFTA) is one LRR 2 repeat.

This sequence belongs to the ZFYVE26 family.

Functionally, phosphatidylinositol 3-phosphate (PtdIns[3]P)-binding protein. Involved in autophagy. In Drosophila melanogaster (Fruit fly), this protein is Zinc finger FYVE domain-containing protein 26 homolog.